An 84-amino-acid chain; its full sequence is MNYLVMISFALLLMKGVESVRDAYIAKPENCVYECGITQDCNKLCTENGAESGYCQWGGKYGNACWCIKLPDSVPIRVPGKCQR.

An N-terminal signal peptide occupies residues 1–19 (MNYLVMISFALLLMKGVES). Positions 21-83 (RDAYIAKPEN…VPIRVPGKCQ (63 aa)) constitute an LCN-type CS-alpha/beta domain. Cystine bridges form between Cys31-Cys82, Cys35-Cys55, Cys41-Cys65, and Cys45-Cys67. Arg84 is a propeptide (removed by a carboxypeptidase).

In terms of tissue distribution, expressed by the venom gland.

The protein resides in the secreted. Functionally, binds to voltage-dependent sodium channels (Nav) and voltage-dependent delayed rectifier potassium channels and inhibits the inactivation of the activated channels, thereby blocking neuronal transmission. Administration to mice at a dosage of 0.8 mg/kg produces an analgesic effect. The polypeptide is Neurotoxin BmK-M10 (Olivierus martensii (Manchurian scorpion)).